We begin with the raw amino-acid sequence, 333 residues long: Taste receptor type 2 member 110 (333 aa).

At 1–13 the chain is on the extracellular side; sequence MFSQIISTSDIFT. A helical transmembrane segment spans residues 14-34; sequence FTIILFVELVIGILGNGFIAL. The Cytoplasmic segment spans residues 35–60; that stretch reads VNIMDWTKRRSISSADQILTALAITR. The helical transmembrane segment at 61–81 threads the bilayer; it reads FLYVWFMIICILLFMLCPHLL. At 82–89 the chain is on the extracellular side; sequence TRSEIVTS. The chain crosses the membrane as a helical span at residues 90–110; it reads IGIIWIVNNHFSVWLATCLGV. Over 111-133 the chain is Cytoplasmic; sequence FYFLKIANFSNSLFLYLKWRVKK. The chain crosses the membrane as a helical span at residues 134–154; it reads VVLMIIQVSMIFLILNLLSLS. The Extracellular segment spans residues 155-205; the sequence is MYDQFSIDVYEGNTSYNLGDSTPFPTISLFINSSKVFVITNSSHIFLPINS. 2 N-linked (GlcNAc...) asparagine glycosylation sites follow: Asn186 and Asn195. The helical transmembrane segment at 206 to 226 threads the bilayer; that stretch reads LFMLIPFTVSLVAFLMLIFSL. The Cytoplasmic portion of the chain corresponds to 227–255; it reads WKHHKKMQVNAKPPRDASTMAHIKALQTG. A helical transmembrane segment spans residues 256–276; it reads FSFLLLYAVYLLFIVIGMLSL. The Extracellular segment spans residues 277 to 283; that stretch reads RLIGGKL. A helical transmembrane segment spans residues 284–304; it reads ILLFDHISGIGFPISHSFVLI. At 305 to 333 the chain is on the cytoplasmic side; sequence LGNNKLRQASLSVLHCLRCRSKDMDTMGP.

This sequence belongs to the G-protein coupled receptor T2R family.

It localises to the membrane. Its function is as follows. Gustducin-coupled receptor implicated in the perception of bitter compounds in the oral cavity and the gastrointestinal tract. Signals through PLCB2 and the calcium-regulated cation channel TRPM5. In Mus musculus (Mouse), this protein is Taste receptor type 2 member 110.